Consider the following 769-residue polypeptide: 5-methyltetrahydropteroyltriglutamate--homocysteine methyltransferase (769 aa).

5-methyltetrahydropteroyltri-L-glutamate is bound by residues 18–21 and Lys127; that span reads RELK. L-homocysteine-binding positions include 447-449 and Glu500; that span reads IGS. L-methionine-binding positions include 447-449 and Glu500; that span reads IGS. 5-methyltetrahydropteroyltri-L-glutamate is bound by residues 531–532 and Trp577; that span reads RC. Asp615 is a binding site for L-homocysteine. Residue Asp615 participates in L-methionine binding. Position 621 (Glu621) interacts with 5-methyltetrahydropteroyltri-L-glutamate. Zn(2+) is bound by residues His657, Cys659, and Glu681. His710 serves as the catalytic Proton donor. A Zn(2+)-binding site is contributed by Cys742.

This sequence belongs to the vitamin-B12 independent methionine synthase family. Requires Zn(2+) as cofactor.

The catalysed reaction is 5-methyltetrahydropteroyltri-L-glutamate + L-homocysteine = tetrahydropteroyltri-L-glutamate + L-methionine. The protein operates within amino-acid biosynthesis; L-methionine biosynthesis via de novo pathway; L-methionine from L-homocysteine (MetE route): step 1/1. Catalyzes the transfer of a methyl group from 5-methyltetrahydrofolate to homocysteine resulting in methionine formation. This chain is 5-methyltetrahydropteroyltriglutamate--homocysteine methyltransferase, found in Chelativorans sp. (strain BNC1).